The primary structure comprises 87 residues: Putative regulatory protein ABC2323 (87 aa).

It belongs to the RemA family.

The polypeptide is Putative regulatory protein ABC2323 (Shouchella clausii (strain KSM-K16) (Alkalihalobacillus clausii)).